A 112-amino-acid polypeptide reads, in one-letter code: Nitrogen regulatory protein P-II (112 aa).

Tyrosine 51 carries the O-UMP-tyrosine modification.

The protein belongs to the P(II) protein family. In terms of assembly, homotrimer.

In terms of biological role, in nitrogen-limiting conditions, when the ratio of Gln to 2-ketoglutarate decreases, P-II is uridylylated to P-II-UMP. P-II-UMP allows the deadenylation of glutamine synthetase (GS), thus activating the enzyme. Conversely, in nitrogen excess P-II is deuridylated and promotes the adenylation of GS. P-II indirectly controls the transcription of the GS gene (glnA). P-II prevents NR-II-catalyzed conversion of NR-I to NR-I-phosphate, the transcriptional activator of glnA. When P-II is uridylylated to P-II-UMP, these events are reversed. In Azospirillum brasilense, this protein is Nitrogen regulatory protein P-II (glnB).